A 357-amino-acid chain; its full sequence is Protein RecA (357 aa).

74 to 81 contacts ATP; the sequence is GPESSGKT.

It belongs to the RecA family.

It is found in the cytoplasm. Functionally, can catalyze the hydrolysis of ATP in the presence of single-stranded DNA, the ATP-dependent uptake of single-stranded DNA by duplex DNA, and the ATP-dependent hybridization of homologous single-stranded DNAs. It interacts with LexA causing its activation and leading to its autocatalytic cleavage. The sequence is that of Protein RecA from Bordetella petrii (strain ATCC BAA-461 / DSM 12804 / CCUG 43448).